Here is a 571-residue protein sequence, read N- to C-terminus: Cerebral cavernous malformations 2 protein-like (571 aa).

Disordered regions lie at residues 164 to 193, 212 to 295, and 544 to 571; these read AGVDASPGGAGRDPGPPGGAPEKRRVGTAE, AEAR…PQDP, and LAPDDDDDDEDEPRGSRGGSDAAEDNYL. Over residues 184-193 the composition is skewed to basic and acidic residues; it reads PEKRRVGTAE. The segment covering 212 to 223 has biased composition (gly residues); that stretch reads AEARAGGGGGGS. The segment covering 237 to 251 has biased composition (basic and acidic residues); the sequence is WERRQTFSGSWERRH. Gly residues predominate over residues 253–264; the sequence is GGGGGGGAGKPG. Positions 286–295 are enriched in pro residues; sequence GPNPLDPQDP. The span at 545–555 shows a compositional bias: acidic residues; the sequence is APDDDDDDEDE.

The protein belongs to the CCM2 family.

This Homo sapiens (Human) protein is Cerebral cavernous malformations 2 protein-like (CCM2L).